Here is a 160-residue protein sequence, read N- to C-terminus: Prorelaxin (160 aa).

Intrachain disulfides connect cysteine 10/cysteine 147, cysteine 22/cysteine 160, and cysteine 146/cysteine 151. A propeptide spans 34–133 (connecting peptide); the sequence is QEKQRILGSG…KDFNLNIYSP (100 aa).

Belongs to the insulin family. Heterodimer of a B chain and an A chain linked by two disulfide bonds. As to expression, expressed in the endometrium during pregnancy and in mammary gland during lactation.

Its subcellular location is the secreted. Its function is as follows. Relaxin is an ovarian hormone that acts with estrogen to produce dilatation of the birth canal in many mammals. It bears mature young, and allows separation of the pelvic bones. This chain is Prorelaxin (RLN), found in Cavia porcellus (Guinea pig).